The following is a 439-amino-acid chain: 5-methylthioadenosine/S-adenosylhomocysteine deaminase (439 aa).

Zn(2+)-binding residues include histidine 70 and histidine 72. The substrate site is built by glutamate 99 and histidine 192. Zn(2+) is bound at residue histidine 219. Substrate contacts are provided by glutamate 222 and aspartate 307. Position 307 (aspartate 307) interacts with Zn(2+).

Belongs to the metallo-dependent hydrolases superfamily. MTA/SAH deaminase family. Requires Zn(2+) as cofactor.

The catalysed reaction is S-adenosyl-L-homocysteine + H2O + H(+) = S-inosyl-L-homocysteine + NH4(+). The enzyme catalyses S-methyl-5'-thioadenosine + H2O + H(+) = S-methyl-5'-thioinosine + NH4(+). Its function is as follows. Catalyzes the deamination of 5-methylthioadenosine and S-adenosyl-L-homocysteine into 5-methylthioinosine and S-inosyl-L-homocysteine, respectively. Is also able to deaminate adenosine. This chain is 5-methylthioadenosine/S-adenosylhomocysteine deaminase, found in Thermodesulfovibrio yellowstonii (strain ATCC 51303 / DSM 11347 / YP87).